The following is a 464-amino-acid chain: Protein FAM90A10 (464 aa).

Disordered stretches follow at residues 1–42 (MMAR…DPRL), 69–373 (VPAT…LPTA), and 415–437 (HSPE…SEAP). Composition is skewed to basic and acidic residues over residues 74–89 (GKKE…KPRG) and 97–114 (NKDK…DPQR). Residues 180 to 197 (LASLSPLRKASLSSSSSL) are compositionally biased toward low complexity.

This sequence belongs to the FAM90 family.

This is Protein FAM90A10 (FAM90A10) from Homo sapiens (Human).